A 183-amino-acid polypeptide reads, in one-letter code: Acireductone dioxygenase (183 aa).

Fe(2+)-binding residues include H95, H97, E101, and H139. Ni(2+) contacts are provided by H95, H97, E101, and H139.

It belongs to the acireductone dioxygenase (ARD) family. As to quaternary structure, monomer. The cofactor is Fe(2+). Requires Ni(2+) as cofactor.

It catalyses the reaction 1,2-dihydroxy-5-(methylsulfanyl)pent-1-en-3-one + O2 = 3-(methylsulfanyl)propanoate + CO + formate + 2 H(+). The enzyme catalyses 1,2-dihydroxy-5-(methylsulfanyl)pent-1-en-3-one + O2 = 4-methylsulfanyl-2-oxobutanoate + formate + 2 H(+). It functions in the pathway amino-acid biosynthesis; L-methionine biosynthesis via salvage pathway; L-methionine from S-methyl-5-thio-alpha-D-ribose 1-phosphate: step 5/6. In terms of biological role, catalyzes 2 different reactions between oxygen and the acireductone 1,2-dihydroxy-3-keto-5-methylthiopentene (DHK-MTPene) depending upon the metal bound in the active site. Fe-containing acireductone dioxygenase (Fe-ARD) produces formate and 2-keto-4-methylthiobutyrate (KMTB), the alpha-ketoacid precursor of methionine in the methionine recycle pathway. Ni-containing acireductone dioxygenase (Ni-ARD) produces methylthiopropionate, carbon monoxide and formate, and does not lie on the methionine recycle pathway. The polypeptide is Acireductone dioxygenase (Hydrogenobaculum sp. (strain Y04AAS1)).